Here is a 795-residue protein sequence, read N- to C-terminus: Putative replication origin-binding protein (795 aa).

The region spanning 121–289 is the Helicase ATP-binding domain; it reads WLSNDKIKTL…DNFGKSIVVN (169 aa). ATP is bound at residue 134-141; it reads SPMGTGKT.

The protein belongs to the mimivirus R1 family.

Its function is as follows. Probably involved in DNA replication. May bind the genome origin of replication (ori). The sequence is that of Putative replication origin-binding protein from Acanthamoeba polyphaga (Amoeba).